The chain runs to 362 residues: Peptide chain release factor 2 (362 aa).

The residue at position 250 (Q250) is an N5-methylglutamine.

It belongs to the prokaryotic/mitochondrial release factor family. Post-translationally, methylated by PrmC. Methylation increases the termination efficiency of RF2.

Its subcellular location is the cytoplasm. Its function is as follows. Peptide chain release factor 2 directs the termination of translation in response to the peptide chain termination codons UGA and UAA. The protein is Peptide chain release factor 2 of Clostridium perfringens (strain ATCC 13124 / DSM 756 / JCM 1290 / NCIMB 6125 / NCTC 8237 / Type A).